The sequence spans 1703 residues: Stress response protein NST1 (1703 aa).

12 disordered regions span residues 1 to 91 (MAKS…AKDA), 243 to 288 (DQPL…PLPP), 347 to 484 (HALR…IWST), 566 to 724 (VSSG…GLGS), 759 to 807 (MHRE…EQRM), 843 to 1292 (LREL…LGAP), 1353 to 1407 (FSPM…IGPI), 1424 to 1465 (HTGA…DIID), 1516 to 1537 (SSFS…NGGG), 1558 to 1581 (ASTP…PWAR), 1595 to 1637 (EQPG…HHQL), and 1672 to 1703 (GAPG…GSHE). Positions 7 to 36 (PRSTPAARAAAVPPPRLAAAAQQQHHQQQP) are enriched in low complexity. The span at 37 to 48 (PSTPPAPVPPTK) shows a compositional bias: pro residues. Residues 57–66 (PPRSASPVSN) show a composition bias toward polar residues. A compositionally biased stretch (basic residues) spans 77–86 (AKKKKKKSKS). The span at 253–273 (NTANNAHPTNVNGAYGQYSSS) shows a compositional bias: polar residues. Residues 274–288 (PNPPPTQPPVEPLPP) show a composition bias toward pro residues. Residues 365–376 (SKNKKKKKKKKG) show a composition bias toward basic residues. The segment covering 384–393 (HGDDEAHEIE) has biased composition (basic and acidic residues). The segment covering 396-409 (VPPPKPVPNHPPPS) has biased composition (pro residues). Low complexity-rich tracts occupy residues 410–419 (TNVSSVARNS) and 453–464 (SSNSGKRSVSSS). Positions 572–581 (IPPPPGPGPF) are enriched in pro residues. Positions 614-650 (THTHTHAHTHTHTHTHTHTHTHAHQHPHPHPHGRKAS) are enriched in basic residues. Acidic residues predominate over residues 657 to 690 (DGYDDDELDDDAEYDDDDDDADYDDEDEDDDVEL). Basic and acidic residues predominate over residues 691–703 (EKERAREDYDKRN). The stretch at 748–1031 (LEMMEQLAER…AKQAAAAASR (284 aa)) forms a coiled coil. Positions 771-802 (ASDDEDDVDGPDDVDDEDLDEEDEDEEDEILT) are enriched in acidic residues. 3 stretches are compositionally biased toward basic and acidic residues: residues 853–866 (EKAR…ESQK), 874–896 (QREA…EAEV), and 904–1023 (RDAE…REAK). Composition is skewed to low complexity over residues 1024–1037 (QAAA…SAAQ) and 1111–1135 (AGGL…AVGS). A compositionally biased stretch (pro residues) spans 1138 to 1148 (PAPPQGLPPRP). Residues 1158–1167 (SSSQTSSVSV) are compositionally biased toward low complexity. The segment covering 1200–1219 (LNAQSNVPMPSAKTPGSSIS) has biased composition (polar residues). A compositionally biased stretch (low complexity) spans 1269–1291 (QNSGMFGSNGSMSSSLQSPSLGA). Over residues 1431–1444 (GRSSSTTSGSGATS) the composition is skewed to low complexity. Residues 1598–1619 (GGNGVGAGSNGGTPSGLGGIGG) show a composition bias toward gly residues.

The protein belongs to the NST1 family.

It localises to the cytoplasm. In terms of biological role, may act as a negative regulator of salt tolerance. The chain is Stress response protein NST1 (NST1) from Mycosarcoma maydis (Corn smut fungus).